A 206-amino-acid chain; its full sequence is Large ribosomal subunit protein uL4 (206 aa).

Positions 46-78 (GNRAQKDREQVKHTTKKPWRQKGTGRARAGMSS) are disordered. Over residues 58 to 70 (HTTKKPWRQKGTG) the composition is skewed to basic residues.

It belongs to the universal ribosomal protein uL4 family. Part of the 50S ribosomal subunit.

Functionally, one of the primary rRNA binding proteins, this protein initially binds near the 5'-end of the 23S rRNA. It is important during the early stages of 50S assembly. It makes multiple contacts with different domains of the 23S rRNA in the assembled 50S subunit and ribosome. In terms of biological role, forms part of the polypeptide exit tunnel. This Burkholderia cenocepacia (strain ATCC BAA-245 / DSM 16553 / LMG 16656 / NCTC 13227 / J2315 / CF5610) (Burkholderia cepacia (strain J2315)) protein is Large ribosomal subunit protein uL4.